The chain runs to 419 residues: Transcription termination factor Rho (419 aa).

In terms of domain architecture, Rho RNA-BD spans 48–123 (EISGDGVLEI…LKVDSINFDR (76 aa)). RNA-binding stretches follow at residues 61–66 (GFGFLR), 78–80 (DIY), and 108–110 (ERY). Residues 169–174 (GKGQRG), 181–186 (KAGKTI), and Arg-212 each bind ATP. An RNA-binding 2 region spans residues 284-288 (VLTGG).

The protein belongs to the Rho family. In terms of assembly, homohexamer. The homohexamer assembles into an open ring structure.

Its function is as follows. Facilitates transcription termination by a mechanism that involves Rho binding to the nascent RNA, activation of Rho's RNA-dependent ATPase activity, and release of the mRNA from the DNA template. The polypeptide is Transcription termination factor Rho (Pseudomonas aeruginosa (strain ATCC 15692 / DSM 22644 / CIP 104116 / JCM 14847 / LMG 12228 / 1C / PRS 101 / PAO1)).